The sequence spans 2176 residues: Protein sidekick-2 (2176 aa).

A signal peptide spans 1–24; that stretch reads MFSSMWRLPLWTLLALHRIHSAGA. At 25 to 1936 the chain is on the extracellular side; sequence QDDVPPYFKT…ASPFYEEWWF (1912 aa). Ig-like C2-type domains follow at residues 30-112, 117-204, 219-298, 312-402, 406-495, and 500-589; these read PYFK…TEVQ, GSFE…QPIT, PTII…SSVA, PQFV…LAVT, PNIT…ADLV, and TRIT…AHLR. Cysteine 52 and cysteine 95 are joined by a disulfide. The N-linked (GlcNAc...) asparagine glycan is linked to asparagine 197. 4 disulfide bridges follow: cysteine 241–cysteine 288, cysteine 334–cysteine 384, cysteine 427–cysteine 479, and cysteine 521–cysteine 573. Fibronectin type-III domains lie at 596-692, 697-793, 798-897, 901-995, 999-1098, 1103-1201, 1206-1303, 1307-1401, 1406-1503, 1508-1625, 1630-1726, 1730-1825, and 1828-1930; these read APEH…LPEE, PPQN…TLQG, PPGN…THED, PVGH…VPPE, APTN…TLQA, APAN…TRES, GPTN…TLDD, PPMG…TEKR, PPSK…TLQA, APTI…VGEA, APQN…TQQA, APGS…TGPG, and APGP…ASPF. Asparagine 747 is a glycosylation site (N-linked (GlcNAc...) asparagine). N-linked (GlcNAc...) asparagine glycans are attached at residues asparagine 940 and asparagine 952. Asparagine 1106 carries N-linked (GlcNAc...) asparagine glycosylation. A glycan (N-linked (GlcNAc...) asparagine) is linked at asparagine 1592. Positions 1712 to 1734 are disordered; that stretch reads DGPRSTPTRGQTQQAAPSAPGSV. The segment covering 1716–1727 has biased composition (polar residues); sequence STPTRGQTQQAA. The chain crosses the membrane as a helical span at residues 1937–1957; that stretch reads LVVIALVGLIFILLLVFVLII. Over 1958-2176 the chain is Cytoplasmic; it reads RGQSKKYSKK…APIAGFSSFV (219 aa). 3 disordered regions span residues 2013–2032, 2043–2070, and 2102–2176; these read GLYT…YSDE, AESS…VDTN, and QAYS…SSFV. 2 stretches are compositionally biased toward polar residues: residues 2044 to 2070 and 2119 to 2129; these read ESSS…VDTN and VPNSNSTQQGS. Positions 2170–2176 match the PDZ-binding motif; that stretch reads AGFSSFV.

The protein belongs to the sidekick family. As to quaternary structure, homodimer; mediates homophilic interactions to promote cell adhesion. Interacts (via PDZ-binding motif) with MAGI1, MAGI2, DLG2, DLG3 and DLG4. As to expression, expressed in retinal ganglion cells (RGCs) that form synapses in distinct inner plexiform layer (IPL) sublaminae. Specifically expressed in specific subsets of retinal ganglion cells (RGCs), named W3B-RGCs, that specifically respond when the timing of the movement of a small object differs from that of the background, but not when they coincide (at protein level). Also present in excitatory amacrine cell type called VG3-ACs, that provide strong and selective input W3B-RGCs (at protein level). Expressed at low levels in the glomeruli.

It is found in the cell membrane. It localises to the synapse. In terms of biological role, adhesion molecule that promotes lamina-specific synaptic connections in the retina and is specifically required for the formation of neuronal circuits that detect motion. Acts by promoting formation of synapses between two specific retinal cell types: the retinal ganglion cells W3B-RGCs and the excitatory amacrine cells VG3-ACs. Formation of synapses between these two cells plays a key role in detection of motion. Promotes synaptic connectivity via homophilic interactions. The chain is Protein sidekick-2 from Mus musculus (Mouse).